A 142-amino-acid chain; its full sequence is MSHLPILLLLLLVSPGLQAAPTQTTSLKATQVNCSNLREEIVTLLNQPPLPSSNFNNLNREDQRILMKPNLRRPNLEAFQKAVKSLQNATAIESSLKDLPLCLPMATNASMQHPIRIKDGDWNDFRMKLKFYLKTLEIKQPQ.

Residues 1–18 (MSHLPILLLLLLVSPGLQ) form the signal peptide. N-linked (GlcNAc...) asparagine glycosylation is found at Asn-33, Asn-88, and Asn-108. A disulfide bridge links Cys-34 with Cys-102.

Belongs to the IL-3 family. Monomer. In terms of tissue distribution, activated T-cells, mast cells, natural killer cells.

It is found in the secreted. In terms of biological role, granulocyte/macrophage colony-stimulating factors are cytokines that act in hematopoiesis by controlling the production, differentiation, and function of 2 related white cell populations of the blood, the granulocytes and the monocytes-macrophages. Its function is as follows. This CSF induces granulocytes, macrophages, mast cells, stem cells, erythroid cells, eosinophils and megakaryocytes. The polypeptide is Interleukin-3 (IL3) (Saguinus oedipus (Cotton-top tamarin)).